An 828-amino-acid chain; its full sequence is Conserved oligomeric Golgi complex subunit 3 (828 aa).

Alanine 2 is modified (N-acetylalanine). Positions 504–543 are disordered; the sequence is DEQKKVPSEASFSDVHLEEGESNSLTKSGSTESLNPRPQT. Residues 525 to 543 show a composition bias toward polar residues; it reads SNSLTKSGSTESLNPRPQT. Phosphoserine is present on serine 663.

Belongs to the COG3 family. As to quaternary structure, component of the conserved oligomeric Golgi complex which is composed of eight different subunits and is required for normal Golgi morphology and localization. Interacts with TMEM115. As to expression, widely expressed with highest levels in pancreas and testis and lowest levels in lung.

It is found in the golgi apparatus. The protein localises to the golgi stack membrane. Functionally, involved in ER-Golgi transport. Also involved in retrograde (Golgi to ER) transport. This Homo sapiens (Human) protein is Conserved oligomeric Golgi complex subunit 3 (COG3).